Reading from the N-terminus, the 50-residue chain is Large ribosomal subunit protein eL39 (50 aa).

The protein belongs to the eukaryotic ribosomal protein eL39 family. As to quaternary structure, part of the 50S ribosomal subunit. Interacts weakly with protein L23.

Its function is as follows. Binds to the 23S rRNA. Forms part of the polypeptide exit tunnel. The sequence is that of Large ribosomal subunit protein eL39 (rpl39e) from Haloarcula marismortui (strain ATCC 43049 / DSM 3752 / JCM 8966 / VKM B-1809) (Halobacterium marismortui).